The primary structure comprises 1208 residues: DNA-directed RNA polymerase subunit beta (1208 aa).

Belongs to the RNA polymerase beta chain family. The RNAP catalytic core consists of 2 alpha, 1 beta, 1 beta' and 1 omega subunit. When a sigma factor is associated with the core the holoenzyme is formed, which can initiate transcription.

The catalysed reaction is RNA(n) + a ribonucleoside 5'-triphosphate = RNA(n+1) + diphosphate. Functionally, DNA-dependent RNA polymerase catalyzes the transcription of DNA into RNA using the four ribonucleoside triphosphates as substrates. This chain is DNA-directed RNA polymerase subunit beta, found in Enterococcus faecium (Streptococcus faecium).